The following is a 784-amino-acid chain: MKKRIPTLLATMIATALYSQQGLAADLASQCMLGVPSYDRPLVQGDTNDLPVTINADHAKGDYPDDAVFTGSVDIMQGNSRLQADEVQLHQKEAPGQPEPVRTVDALGNVHYDDNQVILKGPKGWANLNTKDTNVWEGDYQMVGRQGRGKADLMKQRGENRYTILDNGSFTSCLPGSDTWSVVGSEIIHDREEQVAEIWNARFKVGPVPIFYSPYLQLPVGDKRRSGFLIPNAKYTTTNYFEFYLPYYWNIAPNMDATITPHYMHRRGNIMWENEFRYLSQAGAGLMELDYLPSDKVYKDEHPNDDSSRRWLFYWNHSGVMDQVWRFNVDYTKVSDPSYFNDFDNKYGSSTDGYATQKFSVGYAVQNFNATVSTKQFQVFSEQNTSSYSAEPQLDVNYYQNDVGPFDTRIYGQAVHFVNTRDDMPEATRVHLEPTINLPLSNNWGSINTEAKLLATHYQQTNLDWYNSRNTTKLAESANRVMPQFKVDGRMVFERDMEMLAPGYTQTLEPRAQYLYVPYRDQSKIYNYDSSLLQSDYSGLFRDRTYGGLDRIASANQVTTGVTSRIYDDAAVERFNISVGQIYYFTESRTGDDNITWENDDKTGSLVWAGDTYWRISDRWGLRGGIQYDTRLDNVATSNSSIEYRRDEDRLVQLNYRYASPEYIQATLPKYYSTAEQYKNGISQVGAVASWPIADRWSIVGAYYYDTNANKQADSMLGVQYSSCCYAIRVGYERKLNGWDNDKQHAVYDNAIGFNIELRGLSSNYGLGTQEMLRSNILPYQNTL.

The first 24 residues, M1–A24, serve as a signal peptide directing secretion. Disulfide bonds link C31-C724 and C173-C725.

This sequence belongs to the LptD family. As to quaternary structure, component of the lipopolysaccharide transport and assembly complex. Interacts with LptE and LptA. Post-translationally, contains two intramolecular disulfide bonds.

It localises to the cell outer membrane. Functionally, together with LptE, is involved in the assembly of lipopolysaccharide (LPS) at the surface of the outer membrane. The protein is LPS-assembly protein LptD of Escherichia coli O1:K1 / APEC.